The primary structure comprises 357 residues: Probable dual-specificity RNA methyltransferase RlmN (357 aa).

Glu-95 functions as the Proton acceptor in the catalytic mechanism. In terms of domain architecture, Radical SAM core spans Asn-106–Asp-340. Cys-113 and Cys-345 are oxidised to a cystine. Cys-120, Cys-124, and Cys-127 together coordinate [4Fe-4S] cluster. S-adenosyl-L-methionine is bound by residues Gly-172 to Glu-173, Ser-204, Ser-227 to His-229, and Asn-302. Cys-345 (S-methylcysteine intermediate) is an active-site residue.

The protein belongs to the radical SAM superfamily. RlmN family. [4Fe-4S] cluster is required as a cofactor.

The protein resides in the cytoplasm. The catalysed reaction is adenosine(2503) in 23S rRNA + 2 reduced [2Fe-2S]-[ferredoxin] + 2 S-adenosyl-L-methionine = 2-methyladenosine(2503) in 23S rRNA + 5'-deoxyadenosine + L-methionine + 2 oxidized [2Fe-2S]-[ferredoxin] + S-adenosyl-L-homocysteine. It catalyses the reaction adenosine(37) in tRNA + 2 reduced [2Fe-2S]-[ferredoxin] + 2 S-adenosyl-L-methionine = 2-methyladenosine(37) in tRNA + 5'-deoxyadenosine + L-methionine + 2 oxidized [2Fe-2S]-[ferredoxin] + S-adenosyl-L-homocysteine. In terms of biological role, specifically methylates position 2 of adenine 2503 in 23S rRNA and position 2 of adenine 37 in tRNAs. The chain is Probable dual-specificity RNA methyltransferase RlmN from Desulfitobacterium hafniense (strain DSM 10664 / DCB-2).